Reading from the N-terminus, the 222-residue chain is Probable transcriptional regulator ycf29 (222 aa).

Residues 4–120 form the Response regulatory domain; sequence KLMLVENDIV…ELLSIINNLI (117 aa). Asp-53 bears the 4-aspartylphosphate mark. Positions 139–204 constitute an HTH luxR-type domain; it reads QLNHKIRLTP…LLVKYSINNN (66 aa). A DNA-binding region (H-T-H motif) is located at residues 163–182; the sequence is NKEISTILNTSVRNVEKYVS.

The protein resides in the plastid. It is found in the chloroplast. This chain is Probable transcriptional regulator ycf29 (ycf29), found in Pyropia yezoensis (Susabi-nori).